The primary structure comprises 564 residues: MDIFRVLTRGASVKKESGPKAKAADYSVINGNDENHKEDNNESQIVKELDFFRNKRIISKVEDDREKTTENDSPNKEEKSGNDDGLIKPVITNTVEASALRKSYKGNVSGIDIPLPIGSFEDLISRFSFDKRLLNNLIENGFTEPTPIQCECIPVALNNRDVLACGPTGSGKTLAFLIPLVQQIIDDKQTAGLKGLIISPTKELANQIFIECFKLSYKIFLEKKRPLQVALLSKSLGAKLKNKVVSDKKYDIIISTPLRLIDVVKNEALDLSKVKHLIFDEADKLFDKTFVEQSDDILSACREPSLRKAMFSATIPSNVEEIAQSIMMDPVRVIIGHKEAANTNIEQKLIFCGNEEGKLIAIRQLVQEGEFKPPIIIFLESITRAKALYHELMYDRINVDVIHAERTALQRDRIIERFKTGELWCLICTDVLARGIDFKGVNLVINYDVPGSSQAYVHRIGRTGRGGRSGKAITFYTKQDSVAIKPIINVMKQSGCEVSEWMDKMAKMTRKEKESIKNGKAHKERKQITTVPKMDKAKRRRQQEMIAASKRRKNEELSKKHFSK.

2 disordered regions span residues 1–45 (MDIF…ESQI) and 62–87 (EDDR…DGLI). Composition is skewed to basic and acidic residues over residues 13 to 23 (VKKESGPKAKA), 33 to 45 (DENH…ESQI), and 62 to 86 (EDDR…DDGL). Residues 122 to 150 (DLISRFSFDKRLLNNLIENGFTEPTPIQC) carry the Q motif motif. The Helicase ATP-binding domain occupies 153 to 333 (IPVALNNRDV…QSIMMDPVRV (181 aa)). Residue 166 to 173 (GPTGSGKT) coordinates ATP. A DEAD box motif is present at residues 280–283 (DEAD). One can recognise a Helicase C-terminal domain in the interval 344-506 (NIEQKLIFCG…EVSEWMDKMA (163 aa)). The interval 512–564 (EKESIKNGKAHKERKQITTVPKMDKAKRRRQQEMIAASKRRKNEELSKKHFSK) is disordered. Positions 553–564 (KNEELSKKHFSK) are enriched in basic and acidic residues.

The protein belongs to the DEAD box helicase family. DDX52/ROK1 subfamily. In terms of assembly, interacts with the U3 snoRNA and is associated with the 90S and 40S pre-ribosomes. This association requires the presence of RRP5. Also interacts with OSH3.

The protein resides in the nucleus. It is found in the nucleolus. It carries out the reaction ATP + H2O = ADP + phosphate + H(+). Functionally, ATP-dependent RNA helicase involved in 40S ribosomal subunit biogenesis. Required for the processing and cleavage of 35S pre-rRNA at sites A0, A1, and A2, leading to mature 18S rRNA. May also have a gene-specific regulatory function since it affects nuclear fusion by regulating KAR4 expression and contributes with KEM1 to ISP-1 sensitivity. This chain is ATP-dependent RNA helicase ROK1 (ROK1), found in Saccharomyces cerevisiae (strain ATCC 204508 / S288c) (Baker's yeast).